A 672-amino-acid chain; its full sequence is PHD finger protein MALE STERILITY 1 (672 aa).

The PHD-type zinc-finger motif lies at 614 to 664 (RIECECGATEEDGERMVCCDICEVWQHTRCVGVQHNEEVPRIFLCQSCDQH).

In terms of tissue distribution, in closed flower buds, especially in anthers.

It is found in the nucleus. In terms of biological role, transcriptional activator required for anther and post-meiotic pollen development and maturation. Seems to regulate inflorescence branching and floral development. May control tapetal development by directly regulating tapetal programmed cell death (PCD) and breakdown. Implicated in pollen cytosolic components and wall development (e.g. exine and intine formation). The chain is PHD finger protein MALE STERILITY 1 (MS1) from Arabidopsis thaliana (Mouse-ear cress).